The following is a 214-amino-acid chain: tRNA (guanine-N(7)-)-methyltransferase (214 aa).

The S-adenosyl-L-methionine site is built by Asp-35, Glu-60, Asn-87, and Asp-113. The active site involves Asp-113. 2 residues coordinate substrate: Lys-117 and Asp-149.

The protein belongs to the class I-like SAM-binding methyltransferase superfamily. TrmB family.

It carries out the reaction guanosine(46) in tRNA + S-adenosyl-L-methionine = N(7)-methylguanosine(46) in tRNA + S-adenosyl-L-homocysteine. The protein operates within tRNA modification; N(7)-methylguanine-tRNA biosynthesis. Catalyzes the formation of N(7)-methylguanine at position 46 (m7G46) in tRNA. The chain is tRNA (guanine-N(7)-)-methyltransferase from Prochlorococcus marinus (strain NATL2A).